The chain runs to 207 residues: Ribonuclease HII (207 aa).

The RNase H type-2 domain maps to 20 to 207 (QLFAGVDEVG…KPVKRVLGIE (188 aa)). Positions 26, 27, and 118 each coordinate a divalent metal cation.

This sequence belongs to the RNase HII family. The cofactor is Mn(2+). Mg(2+) is required as a cofactor.

The protein resides in the cytoplasm. It carries out the reaction Endonucleolytic cleavage to 5'-phosphomonoester.. Endonuclease that specifically degrades the RNA of RNA-DNA hybrids. This is Ribonuclease HII from Aliivibrio fischeri (strain MJ11) (Vibrio fischeri).